Reading from the N-terminus, the 477-residue chain is Bifunctional protein HldE (477 aa).

Residues 1–318 (MKVTLSEFER…ENAVRGRADT (318 aa)) form a ribokinase region. N6-acetyllysine is present on Lys-179. 195–198 (NLSE) serves as a coordination point for ATP. Residue Asp-264 is part of the active site. The cytidylyltransferase stretch occupies residues 344 to 477 (MTNGVFDILH…IKKIQQDKKG (134 aa)).

The protein in the N-terminal section; belongs to the carbohydrate kinase PfkB family. It in the C-terminal section; belongs to the cytidylyltransferase family. As to quaternary structure, homodimer.

The catalysed reaction is D-glycero-beta-D-manno-heptose 7-phosphate + ATP = D-glycero-beta-D-manno-heptose 1,7-bisphosphate + ADP + H(+). It carries out the reaction D-glycero-beta-D-manno-heptose 1-phosphate + ATP + H(+) = ADP-D-glycero-beta-D-manno-heptose + diphosphate. Its pathway is nucleotide-sugar biosynthesis; ADP-L-glycero-beta-D-manno-heptose biosynthesis; ADP-L-glycero-beta-D-manno-heptose from D-glycero-beta-D-manno-heptose 7-phosphate: step 1/4. It functions in the pathway nucleotide-sugar biosynthesis; ADP-L-glycero-beta-D-manno-heptose biosynthesis; ADP-L-glycero-beta-D-manno-heptose from D-glycero-beta-D-manno-heptose 7-phosphate: step 3/4. Catalyzes the phosphorylation of D-glycero-D-manno-heptose 7-phosphate at the C-1 position to selectively form D-glycero-beta-D-manno-heptose-1,7-bisphosphate. Functionally, catalyzes the ADP transfer from ATP to D-glycero-beta-D-manno-heptose 1-phosphate, yielding ADP-D-glycero-beta-D-manno-heptose. This Shigella boydii serotype 18 (strain CDC 3083-94 / BS512) protein is Bifunctional protein HldE.